We begin with the raw amino-acid sequence, 122 residues long: Large ribosomal subunit protein uL14 (122 aa).

It belongs to the universal ribosomal protein uL14 family. As to quaternary structure, part of the 50S ribosomal subunit. Forms a cluster with proteins L3 and L19. In the 70S ribosome, L14 and L19 interact and together make contacts with the 16S rRNA in bridges B5 and B8.

Its function is as follows. Binds to 23S rRNA. Forms part of two intersubunit bridges in the 70S ribosome. This chain is Large ribosomal subunit protein uL14, found in Mycobacterium ulcerans (strain Agy99).